The primary structure comprises 1080 residues: Protein transport protein SEC24 C (1080 aa).

Over residues 1–10 (MVAPVPPGAP) the composition is skewed to pro residues. Disordered regions lie at residues 1–189 (MVAP…SGMI), 201–220 (GSGG…TTPQ), and 316–367 (TAMG…SDYV). The span at 12 to 43 (PNSQQNSGPPNFYPGSQGNSNALADNMQNLSL) shows a compositional bias: polar residues. Residues 45-70 (RPPPMMPGSGPRPPPPFGQSPQPFPQ) show a composition bias toward pro residues. Low complexity-rich tracts occupy residues 71–84 (QSPS…GPSP), 142–160 (PAAS…SVAA), and 178–189 (GSGMSMPPSGMI). Residues 340–356 (GSSSSPTVFETRQSNQA) show a composition bias toward polar residues. 4 residues coordinate Zn(2+): Cys430, Cys433, Cys452, and Cys455. The segment at 430-455 (CSRCKGYINPFMKFIDQGRKFICNFC) is zinc finger-like.

The protein belongs to the SEC23/SEC24 family. SEC24 subfamily. In terms of assembly, component of the coat protein complex II (COPII), composed of at least five proteins: the Sec23/24 complex, the Sec13/31 complex and Sar1. As to expression, mainly expressed at low levels in pollen, leaves, roots and stems.

The protein localises to the cytoplasmic vesicle. It is found in the COPII-coated vesicle membrane. Its subcellular location is the endoplasmic reticulum membrane. The protein resides in the golgi apparatus membrane. Its function is as follows. Component of the coat protein complex II (COPII), that covers ER-derived vesicles involved in transport from the endoplasmic reticulum to the Golgi apparatus. COPII is composed of at least five proteins: the SEC23/24 complex, the SEC13/31 complex, and the protein SAR1. Acts in the cytoplasm to promote the transport of secretory, plasma membrane, and vacuolar proteins from the endoplasmic reticulum to the Golgi complex. This is Protein transport protein SEC24 C from Arabidopsis thaliana (Mouse-ear cress).